Consider the following 329-residue polypeptide: Mitochondrial nuclease (329 aa).

Catalysis depends on His138, which acts as the Proton acceptor. A Mg(2+)-binding site is contributed by Asn170.

The protein belongs to the DNA/RNA non-specific endonuclease family. In terms of assembly, homodimer. Mn(2+) is required as a cofactor. The cofactor is Mg(2+).

Its subcellular location is the mitochondrion inner membrane. Its function is as follows. This enzyme has both RNase and DNase activity. The protein is Mitochondrial nuclease (NUC1) of Saccharomyces cerevisiae (strain ATCC 204508 / S288c) (Baker's yeast).